We begin with the raw amino-acid sequence, 332 residues long: MAIPEFTMRQLLEAGVHFGHQSHRWNPKMAEYIFGARNNIHIIDLAQTVPLLHHALQAVSDTVARGGRILFVGTKRQAQDGVADAAKRSAQYFVNSRWLGGTLTNWKTISGSIKRLRHLDEVLNSGDANAYTKKERLTLQRERDKLDRSLGGIKDMGGLPDLMFVIDTNKEDIAIQEAQRLNIPVAAIVDTNCDPKGITYIVPGNDDAGRAISLYCDLIARAAIDGISRAQGESGIDVGASVQPVQEEIPAAAQPAGFQGLAGPRGVADDLKKLTGVSGAIEKKFNDLGIFHYWQLAELDHDTAHRIGEEVGLPSRADGWVAQAKAMTAEAE.

The protein belongs to the universal ribosomal protein uS2 family.

The protein is Small ribosomal subunit protein uS2 of Nitrobacter winogradskyi (strain ATCC 25391 / DSM 10237 / CIP 104748 / NCIMB 11846 / Nb-255).